Here is a 432-residue protein sequence, read N- to C-terminus: Glutamate-1-semialdehyde 2,1-aminomutase (432 aa).

Lysine 272 bears the N6-(pyridoxal phosphate)lysine mark.

The protein belongs to the class-III pyridoxal-phosphate-dependent aminotransferase family. HemL subfamily. In terms of assembly, homodimer. It depends on pyridoxal 5'-phosphate as a cofactor.

It localises to the cytoplasm. It catalyses the reaction (S)-4-amino-5-oxopentanoate = 5-aminolevulinate. Its pathway is porphyrin-containing compound metabolism; protoporphyrin-IX biosynthesis; 5-aminolevulinate from L-glutamyl-tRNA(Glu): step 2/2. The protein operates within porphyrin-containing compound metabolism; chlorophyll biosynthesis. This is Glutamate-1-semialdehyde 2,1-aminomutase from Trichormus variabilis (strain ATCC 29413 / PCC 7937) (Anabaena variabilis).